The sequence spans 597 residues: FERM domain-containing protein 3 (597 aa).

Residues 32–312 enclose the FERM domain; it reads MRCTIRLLDD…ENQAFYKYAK (281 aa). Positions 409–435 are disordered; that stretch reads SAPLISSSPVKAAQEYEDPPSEEEDKI. Positions 423 to 432 are enriched in acidic residues; it reads EYEDPPSEEE. A helical membrane pass occupies residues 531–551; it reads LLVVGLGLLLFVFPLLLLLLE.

The protein localises to the membrane. Its function is as follows. Putative tumor suppressor gene that may be implicated in the origin and progression of lung cancer. In Pongo abelii (Sumatran orangutan), this protein is FERM domain-containing protein 3 (FRMD3).